The primary structure comprises 185 residues: uncharacterized protein (185 aa).

Residues 1 to 69 (MSSFIDSIKS…SSDCSRAERT (69 aa)) are Cytoplasmic-facing. A helical membrane pass occupies residues 70–90 (FNLILFAIVDLVICCESMAFF). Residue N91 is a topological domain, extracellular. A helical transmembrane segment spans residues 92–112 (LLLKLPSMLLVSFLTMLVFSI). Residues 113 to 118 (SYSWSA) lie on the Cytoplasmic side of the membrane. Residues 119–139 (FNWISFAFSSASFLMKACILF) form a helical membrane-spanning segment. Over 140-185 (NSSFTWFGVKAVIAEDMLYRMVRGLFCASFVKQLQTTFLATAIVLC) the chain is Extracellular.

It is found in the membrane. This is an uncharacterized protein from Saccharomyces cerevisiae (strain ATCC 204508 / S288c) (Baker's yeast).